We begin with the raw amino-acid sequence, 215 residues long: 3-isopropylmalate dehydratase small subunit (215 aa).

Belongs to the LeuD family. LeuD type 1 subfamily. In terms of assembly, heterodimer of LeuC and LeuD.

It carries out the reaction (2R,3S)-3-isopropylmalate = (2S)-2-isopropylmalate. The protein operates within amino-acid biosynthesis; L-leucine biosynthesis; L-leucine from 3-methyl-2-oxobutanoate: step 2/4. Functionally, catalyzes the isomerization between 2-isopropylmalate and 3-isopropylmalate, via the formation of 2-isopropylmaleate. The protein is 3-isopropylmalate dehydratase small subunit of Xanthomonas axonopodis pv. citri (strain 306).